Reading from the N-terminus, the 229-residue chain is GTP-binding protein Di-Ras3 (229 aa).

GTP-binding positions include Gly44–Ser51, Arg63–Thr69, Asp91–Gly95, Asn152–Asp155, and Ala182–Lys183. The short motif at Tyr66–Tyr74 is the Effector region element. Cys226 carries the cysteine methyl ester modification. Cys226 carries S-geranylgeranyl cysteine lipidation. The propeptide at Ile227–Met229 is removed in mature form.

The protein belongs to the small GTPase superfamily. Di-Ras family. As to expression, expressed in normal ovarian and breast epithelial cells but not in ovarian and breast cancers.

Its subcellular location is the cell membrane. The polypeptide is GTP-binding protein Di-Ras3 (DIRAS3) (Homo sapiens (Human)).